Here is a 435-residue protein sequence, read N- to C-terminus: Putative F-box/kelch-repeat protein At1g20790 (435 aa).

Residues 1–49 (MKRLPLHLLDEILFNLDPKSLGKMRCTNKSINTHISDDPNFKFEYFSRI) form the F-box domain. Kelch repeat units follow at residues 192–238 (PVYV…CTGD) and 280–335 (LYWN…LFKP).

This chain is Putative F-box/kelch-repeat protein At1g20790, found in Arabidopsis thaliana (Mouse-ear cress).